A 252-amino-acid chain; its full sequence is Phosphate import ATP-binding protein PstB (252 aa).

Positions 5–247 constitute an ABC transporter domain; the sequence is VKIDKLNVHF…PEKKQTEDYI (243 aa). An ATP-binding site is contributed by 37 to 44; it reads GPSGCGKS.

It belongs to the ABC transporter superfamily. Phosphate importer (TC 3.A.1.7) family. In terms of assembly, the complex is composed of two ATP-binding proteins (PstB), two transmembrane proteins (PstC and PstA) and a solute-binding protein (PstS).

It is found in the cell inner membrane. The enzyme catalyses phosphate(out) + ATP + H2O = ADP + 2 phosphate(in) + H(+). In terms of biological role, part of the ABC transporter complex PstSACB involved in phosphate import. Responsible for energy coupling to the transport system. The sequence is that of Phosphate import ATP-binding protein PstB from Geobacter metallireducens (strain ATCC 53774 / DSM 7210 / GS-15).